The chain runs to 539 residues: MELAMDFALRLRDAANHHLSRYEPLVLLAAPLLALLAARTLHAAAAAVADRGLRTVLLALAMTAIKLLPGVSAYINAEKRKVVDQLQSGGTSTKSTLRTELPTVGLSNQVINDLETLKARDVNWQGKCSGTVYIAGSESEGHFALINKAYSMFSHTNPLHQDVFKSVAQLEAEVVAMTAALLGIKEKSSGGQICGNMTSGGTESILLAVKTSRDYMRTKKGITKPEMIIAESAHSAYDKAAQYFNIKVRRVPVNKEFLADVKGFKRCINGNTIMMVGSAPGFPHGLIDPIEELGELASRYDICLHVDLCLGGFVLPFARKLGYPIPPFDFCVKGVTSISTDVHKYGLAPKGTSIVLYKNHEIRKHQFVAVTEWTGGLYVSPTIAGSRPGGLIAGAWAAMTSLGLNGYMENTGHIMEVSKKIQRGIEDIPGLFVIGKPDMTVVAFGSDSVDIFEVNDIMSSKGWHLNALQRPNSLHICVTLQHTVIYEEFLKDLKDSVDTVKANPGPISGGRAPIYGAAGKMPDRGMVRELLVEFMDASC.

Residues 1–46 form the signal peptide; the sequence is MELAMDFALRLRDAANHHLSRYEPLVLLAAPLLALLAARTLHAAAA. Residues 47 to 54 are Lumenal-facing; it reads AVADRGLR. The helical transmembrane segment at 55–75 threads the bilayer; it reads TVLLALAMTAIKLLPGVSAYI. Over 76 to 539 the chain is Cytoplasmic; sequence NAEKRKVVDQ…LLVEFMDASC (464 aa). An N6-(pyridoxal phosphate)lysine modification is found at Lys-344.

It belongs to the group II decarboxylase family. Sphingosine-1-phosphate lyase subfamily. Pyridoxal 5'-phosphate serves as cofactor.

The protein resides in the endoplasmic reticulum membrane. It carries out the reaction sphinganine 1-phosphate = hexadecanal + phosphoethanolamine. It participates in lipid metabolism; sphingolipid metabolism. In terms of biological role, cleaves phosphorylated sphingoid bases (PSBs), such as sphingosine-1-phosphate, into fatty aldehydes and phosphoethanolamine. Elevates stress-induced ceramide production and apoptosis. The protein is Sphingosine-1-phosphate lyase (SPL) of Oryza sativa subsp. japonica (Rice).